A 326-amino-acid chain; its full sequence is GTP 3',8-cyclase (326 aa).

In terms of domain architecture, Radical SAM core spans Gly-7–Arg-232. GTP is bound at residue Arg-16. Residues Cys-23 and Cys-27 each contribute to the [4Fe-4S] cluster site. An S-adenosyl-L-methionine-binding site is contributed by Tyr-29. Cys-30 serves as a coordination point for [4Fe-4S] cluster. Residue Arg-65 coordinates GTP. Gly-69 serves as a coordination point for S-adenosyl-L-methionine. Thr-96 provides a ligand contact to GTP. Ser-120 lines the S-adenosyl-L-methionine pocket. A GTP-binding site is contributed by Lys-157. Residue Met-191 coordinates S-adenosyl-L-methionine. The [4Fe-4S] cluster site is built by Cys-254 and Cys-257. Residue Arg-259 to Arg-261 coordinates GTP. Cys-271 contributes to the [4Fe-4S] cluster binding site.

It belongs to the radical SAM superfamily. MoaA family. Monomer and homodimer. It depends on [4Fe-4S] cluster as a cofactor.

It carries out the reaction GTP + AH2 + S-adenosyl-L-methionine = (8S)-3',8-cyclo-7,8-dihydroguanosine 5'-triphosphate + 5'-deoxyadenosine + L-methionine + A + H(+). The protein operates within cofactor biosynthesis; molybdopterin biosynthesis. In terms of biological role, catalyzes the cyclization of GTP to (8S)-3',8-cyclo-7,8-dihydroguanosine 5'-triphosphate. This Stenotrophomonas maltophilia (strain K279a) protein is GTP 3',8-cyclase.